A 552-amino-acid polypeptide reads, in one-letter code: Chaperonin GroEL (552 aa).

ATP contacts are provided by residues 30 to 33 (TLGP), Lys51, 87 to 91 (DGTTT), Gly415, 480 to 482 (NAA), and Asp496.

This sequence belongs to the chaperonin (HSP60) family. In terms of assembly, forms a cylinder of 14 subunits composed of two heptameric rings stacked back-to-back. Interacts with the co-chaperonin GroES.

Its subcellular location is the cytoplasm. The enzyme catalyses ATP + H2O + a folded polypeptide = ADP + phosphate + an unfolded polypeptide.. Together with its co-chaperonin GroES, plays an essential role in assisting protein folding. The GroEL-GroES system forms a nano-cage that allows encapsulation of the non-native substrate proteins and provides a physical environment optimized to promote and accelerate protein folding. The chain is Chaperonin GroEL from Verminephrobacter eiseniae (strain EF01-2).